The sequence spans 104 residues: MSVQGIDGVLQQMQVKALQASGTPIARPSVEPGFASELKAAIDKISDTQQTARTQAEKFTLGVPGVALNDVMVDLQKSSISMQMGIQVRNKLVSAYQEVMNMSV.

It belongs to the FliE family.

It localises to the bacterial flagellum basal body. This chain is Flagellar hook-basal body complex protein FliE, found in Pectobacterium carotovorum subsp. carotovorum (strain PC1).